We begin with the raw amino-acid sequence, 131 residues long: Large ribosomal subunit protein bL17 (131 aa).

The protein belongs to the bacterial ribosomal protein bL17 family. As to quaternary structure, part of the 50S ribosomal subunit. Contacts protein L32.

This is Large ribosomal subunit protein bL17 from Teredinibacter turnerae (strain ATCC 39867 / T7901).